We begin with the raw amino-acid sequence, 700 residues long: Glycine--tRNA ligase beta subunit (700 aa).

This sequence belongs to the class-II aminoacyl-tRNA synthetase family. In terms of assembly, tetramer of two alpha and two beta subunits.

It is found in the cytoplasm. It catalyses the reaction tRNA(Gly) + glycine + ATP = glycyl-tRNA(Gly) + AMP + diphosphate. This is Glycine--tRNA ligase beta subunit from Helicobacter pylori (strain Shi470).